Reading from the N-terminus, the 345-residue chain is 4-hydroxy-2-oxovalerate aldolase 1 (345 aa).

The Pyruvate carboxyltransferase domain occupies 9–261 (IRVTDTSLRD…RTGIDFFAIA (253 aa)). A substrate-binding site is contributed by 17-18 (RD). D18 is a Mn(2+) binding site. Residue H21 is the Proton acceptor of the active site. The substrate site is built by S171 and H200. Mn(2+)-binding residues include H200 and H202. Position 291 (Y291) interacts with substrate.

Belongs to the 4-hydroxy-2-oxovalerate aldolase family.

The enzyme catalyses (S)-4-hydroxy-2-oxopentanoate = acetaldehyde + pyruvate. The sequence is that of 4-hydroxy-2-oxovalerate aldolase 1 from Nocardia farcinica (strain IFM 10152).